A 130-amino-acid chain; its full sequence is Small ribosomal subunit protein uS9 (130 aa).

This sequence belongs to the universal ribosomal protein uS9 family.

The protein is Small ribosomal subunit protein uS9 of Nitrosomonas eutropha (strain DSM 101675 / C91 / Nm57).